Here is a 253-residue protein sequence, read N- to C-terminus: Triosephosphate isomerase (253 aa).

9-11 (NWK) is a substrate binding site. Catalysis depends on His-97, which acts as the Electrophile. Catalysis depends on Glu-169, which acts as the Proton acceptor. Residues Gly-175, Ser-215, and 236–237 (GG) each bind substrate.

Belongs to the triosephosphate isomerase family. As to quaternary structure, homodimer.

The protein resides in the cytoplasm. The catalysed reaction is D-glyceraldehyde 3-phosphate = dihydroxyacetone phosphate. It participates in carbohydrate biosynthesis; gluconeogenesis. It functions in the pathway carbohydrate degradation; glycolysis; D-glyceraldehyde 3-phosphate from glycerone phosphate: step 1/1. Involved in the gluconeogenesis. Catalyzes stereospecifically the conversion of dihydroxyacetone phosphate (DHAP) to D-glyceraldehyde-3-phosphate (G3P). This Staphylococcus saprophyticus subsp. saprophyticus (strain ATCC 15305 / DSM 20229 / NCIMB 8711 / NCTC 7292 / S-41) protein is Triosephosphate isomerase.